A 439-amino-acid chain; its full sequence is Acyl-coenzyme A thioesterase 9, mitochondrial (439 aa).

A mitochondrion-targeting transit peptide spans Met-1 to Gly-21. HotDog ACOT-type domains are found at residues Ser-85–Glu-209 and Glu-289–Val-401. Residue Lys-102 is modified to N6-acetyllysine.

It belongs to the acyl coenzyme A hydrolase family. Interacts with NYAP1, NYAP2 and MYO16. In terms of tissue distribution, widely expressed.

It is found in the mitochondrion. It localises to the mitochondrion matrix. Its subcellular location is the mitochondrion inner membrane. It catalyses the reaction butanoyl-CoA + H2O = butanoate + CoA + H(+). The enzyme catalyses propanoyl-CoA + H2O = propanoate + CoA + H(+). It carries out the reaction hexadecanoyl-CoA + H2O = hexadecanoate + CoA + H(+). The catalysed reaction is octanoyl-CoA + H2O = octanoate + CoA + H(+). It catalyses the reaction decanoyl-CoA + H2O = decanoate + CoA + H(+). The enzyme catalyses tetradecanoyl-CoA + H2O = tetradecanoate + CoA + H(+). It carries out the reaction 4,8-dimethylnonanoyl-CoA + H2O = 4,8-dimethylnonanoate + CoA + H(+). The catalysed reaction is 3-methylbutanoyl-CoA + H2O = 3-methylbutanoate + CoA + H(+). It catalyses the reaction 2-methylpropanoyl-CoA + H2O = 2-methylpropanoate + CoA + H(+). It participates in lipid metabolism; fatty acid metabolism. Strongly inhibited by NADH and CoA. Its function is as follows. Mitochondrial acyl-CoA thioesterase. Catalyzes the hydrolysis of acyl-CoAs into free fatty acids and coenzyme A (CoA), regulating their respective intracellular levels. Shows a clear preference for hydrophobic short-, medium-, and long-chain saturated acyl-CoAs with some activity also with short-chain dicarboxylic CoA esters. Regulates both mitochondrial lipid and amino acid metabolism. In Mus musculus (Mouse), this protein is Acyl-coenzyme A thioesterase 9, mitochondrial (Acot9).